The following is a 370-amino-acid chain: MKTKLILLYGGKSAEHEVSLQTAFSVINALDLEKFEAAPIYITNEGEWIQGPLLSGKLDFVEQLRFSATDTIKLATTESEKSEGEAISPAVLEADGQETVVFPLLHGPNGEDGTVQGLFEVLNIPYVGNGVLASSAAMDKIVMKKIFADAGIPQVPAVAVRLIDWKNYQEEMVAEMEEVLTYPVFVKPANLGSSVGISKATNKKELVDAMTEAFLYDRRVVVEQGVVAREIEMGVLGNDTPVCSVPGEILPEGAVATFYDYKAKYQDNNTALIIPTEVDPEILEQMKEYAIQAFLGLDASGLVRADFFLTEDNQLFLNEVNTMPGFTPYSMYPLLWQETGLPYGALIERLVDLAKERHAAKNALKYKLED.

Residues 144-352 (KKIFADAGIP…YGALIERLVD (209 aa)) enclose the ATP-grasp domain. 177-232 (EEVLTYPVFVKPANLGSSVGISKATNKKELVDAMTEAFLYDRRVVVEQGVVAREIE) contacts ATP. Mg(2+) contacts are provided by aspartate 306, glutamate 319, and asparagine 321.

It belongs to the D-alanine--D-alanine ligase family. Mg(2+) serves as cofactor. Requires Mn(2+) as cofactor.

It localises to the cytoplasm. The enzyme catalyses 2 D-alanine + ATP = D-alanyl-D-alanine + ADP + phosphate + H(+). It functions in the pathway cell wall biogenesis; peptidoglycan biosynthesis. Cell wall formation. The protein is D-alanine--D-alanine ligase of Listeria monocytogenes serovar 1/2a (strain ATCC BAA-679 / EGD-e).